Here is a 199-residue protein sequence, read N- to C-terminus: RNA-free ribonuclease P (199 aa).

Belongs to the HARP family.

The enzyme catalyses Endonucleolytic cleavage of RNA, removing 5'-extranucleotides from tRNA precursor.. In terms of biological role, RNA-free RNase P that catalyzes the removal of the 5'-leader sequence from pre-tRNA to produce the mature 5'-terminus. This chain is RNA-free ribonuclease P, found in Thermococcus onnurineus (strain NA1).